Consider the following 270-residue polypeptide: Ribosomal RNA small subunit methyltransferase J (270 aa).

S-adenosyl-L-methionine is bound by residues 126–127 and D182; that span reads ER.

It belongs to the methyltransferase superfamily. RsmJ family.

The protein localises to the cytoplasm. It catalyses the reaction guanosine(1516) in 16S rRNA + S-adenosyl-L-methionine = N(2)-methylguanosine(1516) in 16S rRNA + S-adenosyl-L-homocysteine + H(+). Specifically methylates the guanosine in position 1516 of 16S rRNA. In Acinetobacter baylyi (strain ATCC 33305 / BD413 / ADP1), this protein is Ribosomal RNA small subunit methyltransferase J.